Reading from the N-terminus, the 209-residue chain is 2-phospho-L-lactate guanylyltransferase (209 aa).

This sequence belongs to the CofC family. Homodimer.

The catalysed reaction is (2S)-2-phospholactate + GTP + H(+) = (2S)-lactyl-2-diphospho-5'-guanosine + diphosphate. Its pathway is cofactor biosynthesis; coenzyme F420 biosynthesis. Guanylyltransferase that catalyzes the activation of (2S)-2-phospholactate (2-PL) as (2S)-lactyl-2-diphospho-5'-guanosine, via the condensation of 2-PL with GTP. It is involved in the biosynthesis of coenzyme F420, a hydride carrier cofactor. The polypeptide is 2-phospho-L-lactate guanylyltransferase (Halobacterium salinarum (strain ATCC 29341 / DSM 671 / R1)).